The primary structure comprises 355 residues: Blue-sensitive opsin P467 (355 aa).

Topologically, residues 1–36 are extracellular; that stretch reads MNGTEGINFYVPLSNKTGLVRSPFEYPQYYLADPWK. Residues Asn-2 and Asn-15 are each glycosylated (N-linked (GlcNAc...) asparagine). A helical transmembrane segment spans residues 37–61; the sequence is FKVLSFYMFFLIAAGMPLNGLTLFV. Over 62–73 the chain is Cytoplasmic; the sequence is TFQHKKLRQPLN. The helical transmembrane segment at 74–98 threads the bilayer; that stretch reads YILVNLAAANLVTVCCGFTVTFYAS. Residues 99–113 lie on the Extracellular side of the membrane; sequence WYAYFVFGPIGCAIE. Residues Cys-110 and Cys-187 are joined by a disulfide bond. The chain crosses the membrane as a helical span at residues 114–133; sequence GFFATIGGQVALWSLVVLAI. The Cytoplasmic portion of the chain corresponds to 134-152; that stretch reads ERYIVICKPMGNFRFSATH. The helical transmembrane segment at 153–176 threads the bilayer; sequence AIMGIAFTWFMALACAGPPLFGWS. The Extracellular portion of the chain corresponds to 177–202; it reads RFIPEGMQCSCGPDYYTLNPDFHNES. N-linked (GlcNAc...) asparagine glycosylation is present at Asn-200. The helical transmembrane segment at 203 to 230 threads the bilayer; the sequence is YVIYMFIVHFTVPMVVIFFSYGRLVCKV. Over 231–252 the chain is Cytoplasmic; sequence REAAAQQQESATTQKAEKEVTR. Residues 253–276 traverse the membrane as a helical segment; it reads MVILMVLGFLLAWTPYAATAIWIF. Over 277 to 284 the chain is Extracellular; that stretch reads TNRGAAFS. The chain crosses the membrane as a helical span at residues 285 to 309; that stretch reads VTFMTIPAFFSKSSSIYNPIIYVLL. Lys-296 is subject to N6-(retinylidene)lysine. Residues 310–355 are Cytoplasmic-facing; it reads NKQFRNCMVTTICCGKNPFGDEDVSSSVSQSKTEVSSVSSSQVAPA. The segment at 333 to 355 is disordered; sequence VSSSVSQSKTEVSSVSSSQVAPA. The span at 334–355 shows a compositional bias: low complexity; sequence SSSVSQSKTEVSSVSSSQVAPA.

It belongs to the G-protein coupled receptor 1 family. Opsin subfamily. Phosphorylated on some or all of the serine and threonine residues present in the C-terminal region. In this lizard the color pigments are found in the rod-shaped photoreceptor cells which have been derived from ancestral cone-like photoreceptors.

The protein localises to the membrane. In terms of biological role, visual pigments are the light-absorbing molecules that mediate vision. They consist of an apoprotein, opsin, covalently linked to cis-retinal. In Gekko gecko (Tokay gecko), this protein is Blue-sensitive opsin P467.